Reading from the N-terminus, the 307-residue chain is Protoheme IX farnesyltransferase (307 aa).

8 helical membrane-spanning segments follow: residues 32 to 52 (VVEL…RGIP), 54 to 74 (LWLV…AGAF), 105 to 125 (LVFA…FTNW), 126 to 146 (LAAG…TLIL), 169 to 189 (WAVV…VIFL), 222 to 242 (VVGL…LLLI), 244 to 264 (VARM…WFLY), and 287 to 307 (GSIA…LLPF).

Belongs to the UbiA prenyltransferase family. Protoheme IX farnesyltransferase subfamily.

The protein localises to the cell membrane. The enzyme catalyses heme b + (2E,6E)-farnesyl diphosphate + H2O = Fe(II)-heme o + diphosphate. It participates in porphyrin-containing compound metabolism; heme O biosynthesis; heme O from protoheme: step 1/1. In terms of biological role, converts heme B (protoheme IX) to heme O by substitution of the vinyl group on carbon 2 of heme B porphyrin ring with a hydroxyethyl farnesyl side group. This Leifsonia xyli subsp. xyli (strain CTCB07) protein is Protoheme IX farnesyltransferase.